Consider the following 443-residue polypeptide: Histidinol dehydrogenase (443 aa).

Residues Tyr127, Gln185, and Asn208 each contribute to the NAD(+) site. Substrate is bound by residues Ser234, Gln256, and His259. Zn(2+) contacts are provided by Gln256 and His259. Active-site proton acceptor residues include Glu323 and His324. The substrate site is built by His324, Asp357, Glu411, and His416. Asp357 serves as a coordination point for Zn(2+). His416 lines the Zn(2+) pocket.

It belongs to the histidinol dehydrogenase family. It depends on Zn(2+) as a cofactor.

It catalyses the reaction L-histidinol + 2 NAD(+) + H2O = L-histidine + 2 NADH + 3 H(+). It participates in amino-acid biosynthesis; L-histidine biosynthesis; L-histidine from 5-phospho-alpha-D-ribose 1-diphosphate: step 9/9. Functionally, catalyzes the sequential NAD-dependent oxidations of L-histidinol to L-histidinaldehyde and then to L-histidine. The sequence is that of Histidinol dehydrogenase from Photobacterium profundum (strain SS9).